Consider the following 153-residue polypeptide: Ribosome maturation factor RimP (153 aa).

The protein belongs to the RimP family.

The protein resides in the cytoplasm. Required for maturation of 30S ribosomal subunits. The sequence is that of Ribosome maturation factor RimP from Christiangramia forsetii (strain DSM 17595 / CGMCC 1.15422 / KT0803) (Gramella forsetii).